Consider the following 383-residue polypeptide: Succinate--CoA ligase [ADP-forming] subunit beta 2 (383 aa).

The ATP-grasp domain occupies 9-231 (RELFKEHGIV…QEDADSLEAR (223 aa)). ATP contacts are provided by residues Lys-45, 52-54 (GRG), Cys-94, and Glu-99. Positions 187 and 201 each coordinate Mg(2+). Substrate-binding positions include Asn-251 and 308 to 310 (GIT).

Belongs to the succinate/malate CoA ligase beta subunit family. As to quaternary structure, heterotetramer of two alpha and two beta subunits. Mg(2+) is required as a cofactor.

It carries out the reaction succinate + ATP + CoA = succinyl-CoA + ADP + phosphate. It catalyses the reaction GTP + succinate + CoA = succinyl-CoA + GDP + phosphate. The protein operates within carbohydrate metabolism; tricarboxylic acid cycle; succinate from succinyl-CoA (ligase route): step 1/1. Functionally, succinyl-CoA synthetase functions in the citric acid cycle (TCA), coupling the hydrolysis of succinyl-CoA to the synthesis of either ATP or GTP and thus represents the only step of substrate-level phosphorylation in the TCA. The beta subunit provides nucleotide specificity of the enzyme and binds the substrate succinate, while the binding sites for coenzyme A and phosphate are found in the alpha subunit. This Streptomyces coelicolor (strain ATCC BAA-471 / A3(2) / M145) protein is Succinate--CoA ligase [ADP-forming] subunit beta 2.